We begin with the raw amino-acid sequence, 360 residues long: Phosphoserine aminotransferase (360 aa).

Arg42 is an L-glutamate binding site. Residues 76–77 (AS), Trp102, Thr152, Asp172, and Gln195 each bind pyridoxal 5'-phosphate. Residue Lys196 is modified to N6-(pyridoxal phosphate)lysine. 237-238 (NT) contributes to the pyridoxal 5'-phosphate binding site.

The protein belongs to the class-V pyridoxal-phosphate-dependent aminotransferase family. SerC subfamily. In terms of assembly, homodimer. Pyridoxal 5'-phosphate serves as cofactor.

It localises to the cytoplasm. It carries out the reaction O-phospho-L-serine + 2-oxoglutarate = 3-phosphooxypyruvate + L-glutamate. The enzyme catalyses 4-(phosphooxy)-L-threonine + 2-oxoglutarate = (R)-3-hydroxy-2-oxo-4-phosphooxybutanoate + L-glutamate. The protein operates within amino-acid biosynthesis; L-serine biosynthesis; L-serine from 3-phospho-D-glycerate: step 2/3. In terms of biological role, catalyzes the reversible conversion of 3-phosphohydroxypyruvate to phosphoserine and of 3-hydroxy-2-oxo-4-phosphonooxybutanoate to phosphohydroxythreonine. The chain is Phosphoserine aminotransferase from Bacillus cereus (strain ATCC 10987 / NRS 248).